Consider the following 319-residue polypeptide: 33 kDa chaperonin (319 aa).

Disulfide bonds link Cys-239-Cys-241 and Cys-272-Cys-275. The segment at 300–319 is disordered; that stretch reads EVSEEMKKAEEKEKEEKNKK.

Belongs to the HSP33 family. Post-translationally, under oxidizing conditions two disulfide bonds are formed involving the reactive cysteines. Under reducing conditions zinc is bound to the reactive cysteines and the protein is inactive.

It is found in the cytoplasm. Functionally, redox regulated molecular chaperone. Protects both thermally unfolding and oxidatively damaged proteins from irreversible aggregation. Plays an important role in the bacterial defense system toward oxidative stress. This Clostridium perfringens (strain ATCC 13124 / DSM 756 / JCM 1290 / NCIMB 6125 / NCTC 8237 / Type A) protein is 33 kDa chaperonin.